The following is a 174-amino-acid chain: Ribosome maturation factor RimM (174 aa).

The region spanning 98–171 (EGEFYFHQII…TIHIEVMEGL (74 aa)) is the PRC barrel domain.

This sequence belongs to the RimM family. In terms of assembly, binds ribosomal protein uS19.

Its subcellular location is the cytoplasm. Functionally, an accessory protein needed during the final step in the assembly of 30S ribosomal subunit, possibly for assembly of the head region. Essential for efficient processing of 16S rRNA. May be needed both before and after RbfA during the maturation of 16S rRNA. It has affinity for free ribosomal 30S subunits but not for 70S ribosomes. The chain is Ribosome maturation factor RimM from Bacillus pumilus (strain SAFR-032).